A 349-amino-acid polypeptide reads, in one-letter code: 2-oxoglutarate-Fe(II) type oxidoreductase ppzD (349 aa).

The 112-residue stretch at 200–311 folds into the Fe2OG dioxygenase domain; that stretch reads NTSELRLNHY…RYSVAYFGKP (112 aa). Fe cation contacts are provided by His-227, Asp-229, and His-287. Arg-302 contributes to the 2-oxoglutarate binding site.

It belongs to the iron/ascorbate-dependent oxidoreductase family. Requires Fe(2+) as cofactor.

The catalysed reaction is L-proline + 2-oxoglutarate + O2 = trans-4-hydroxy-L-proline + succinate + CO2. It carries out the reaction L-proline + 2-oxoglutarate + O2 = trans-3-hydroxy-L-proline + succinate + CO2. The enzyme catalyses D-proline + 2-oxoglutarate + O2 = cis-4-hydroxy-D-proline + succinate + CO2. The protein operates within secondary metabolite biosynthesis. Its function is as follows. 2-oxoglutarate-Fe(II) type oxidoreductase; part of the gene cluster that mediates the biosynthesis of pyrrolopyrazines, secondary metabolites showing insecticidal activity. Within the pathway, ppzD converts L-proline into trans-4-hydroxy-L-proline as a major product, yielding a key precursor for peramine biosynthesis. PpzD is also able to convert L-proline into trans-3-hydroxy-L-proline. The single multifunctional NRPS ppzA is sufficient to produce peramine via condensation of 1-pyrroline-5-carboxylate and arginine, N-methylation of the alpha-amino group of arginine and reduction of the thioester and the cyclization to form an iminium ion resulting in release from the peptide synthetase. Deprotonation of this intermediate and oxidation of the pyrroline ring would give rise to peramine. In Epichloe species that produce only peramine, the peramine synthetase gene is not localized in a gene cluster, in contrast to Metarhizium species that contain additional pyrrolopyrazine biosynthesis genes. The 2-oxoglutarate-Fe(II) type oxidoreductase ppzC hydroxylates peramine to yield the newly identified compound 8-hydroxyperamine whereas ppzD converts L-proline into trans-4-hydroxy-L-proline, a precursor of peramine biosynthesis. This is 2-oxoglutarate-Fe(II) type oxidoreductase ppzD (ppzD) from Metarhizium majus (strain ARSEF 297).